A 468-amino-acid chain; its full sequence is Sorting and assembly machinery component 50 homolog (468 aa).

A disordered region spans residues 1–24; sequence MGTVHARSLDPLPMNGPDFGSHDD. The 81-residue stretch at 44-124 folds into the POTRA domain; the sequence is VVVQRVHFEG…LDVTFEVTEL (81 aa).

Belongs to the SAM50/omp85 family. In terms of assembly, associates with the mitochondrial contact site and cristae organizing system (MICOS) complex (also known as MINOS or MitOS complex).

It localises to the mitochondrion outer membrane. Its function is as follows. May play a role in the maintenance of the structure of mitochondrial cristae. This Xenopus tropicalis (Western clawed frog) protein is Sorting and assembly machinery component 50 homolog (samm50).